The chain runs to 242 residues: MSQPGKVKGQQAFVLHAQPYKETSLLVEMFTREHGRVGLVARGARRPRAGIRALLLPFSPLEVGWFGKSDIRTLSDIDWQGGLPQLAGTPLVTGFYVNELIMKLVARDDPHEGLFDDYRTLIAHLARGSVAIAPVLRRFELQLLAATGYAPTLDRDLAGEPVRADAVYGFVPGEGARPGAERGCEVSGQTLLALDHGALDQASAAVLREARFLNRALLTHALAGTELASRALLNEVAALSDN.

It belongs to the RecO family.

Its function is as follows. Involved in DNA repair and RecF pathway recombination. The polypeptide is DNA repair protein RecO (Laribacter hongkongensis (strain HLHK9)).